The chain runs to 399 residues: MSFSREEDKKLKFKTSKKLKISPTFESMNLKDDLLRGIYGYGFEAPSAIQSRAITQIISGTDVIAQAQSGTGKTATFTIGMLQAIDLKRKDLQALVLSPTRELASQINQVVSNLGDYMNVQSYAMTGGKTMKDDLNRMQKNGCQVVSGTPGRVLDMFKRHLLNTRNVQMLILDEADELLGESLGFKQQIYDIFTKLPAACQVVVVSATMSKDILEVTKKFMSDPVKILVKRDEISLEGIKQYYVNVEKEDWKFDTLCDLYDSLTITQCVIFCNTKKKVDWLSAKLTQSNFAVVSMHGDMKQEDRNKVMSDFRSGHSRVLISTDVWARGIDVQQVSLVINYDIPEIMENYIHRIGRSGRFGRKGVAINFITSSDLSKMKEIEKYYRIKISPVPADLSTIS.

Residues 23–51 carry the Q motif motif; that stretch reads PTFESMNLKDDLLRGIYGYGFEAPSAIQS. A Helicase ATP-binding domain is found at 54-227; that stretch reads ITQIISGTDV…KKFMSDPVKI (174 aa). Position 67 to 74 (67 to 74) interacts with ATP; that stretch reads AQSGTGKT. A DEAD box motif is present at residues 173–176; the sequence is DEAD. Residues 238-399 enclose the Helicase C-terminal domain; sequence GIKQYYVNVE…PVPADLSTIS (162 aa).

This sequence belongs to the DEAD box helicase family. DDX48/FAL1 subfamily.

It localises to the nucleus. Its subcellular location is the nucleolus. It carries out the reaction ATP + H2O = ADP + phosphate + H(+). Its function is as follows. ATP-dependent RNA helicase involved in 40S ribosomal subunit biogenesis. Required for the processing and cleavage of 35S pre-rRNA at sites A0, A1, and A2, leading to mature 18S rRNA. The chain is ATP-dependent RNA helicase FAL1 (FAL1) from Vanderwaltozyma polyspora (strain ATCC 22028 / DSM 70294 / BCRC 21397 / CBS 2163 / NBRC 10782 / NRRL Y-8283 / UCD 57-17) (Kluyveromyces polysporus).